Here is a 227-residue protein sequence, read N- to C-terminus: 2-phospho-L-lactate guanylyltransferase (227 aa).

This sequence belongs to the CofC family. As to quaternary structure, homodimer.

It catalyses the reaction (2S)-2-phospholactate + GTP + H(+) = (2S)-lactyl-2-diphospho-5'-guanosine + diphosphate. It functions in the pathway cofactor biosynthesis; coenzyme F420 biosynthesis. In terms of biological role, guanylyltransferase that catalyzes the activation of (2S)-2-phospholactate (2-PL) as (2S)-lactyl-2-diphospho-5'-guanosine, via the condensation of 2-PL with GTP. It is involved in the biosynthesis of coenzyme F420, a hydride carrier cofactor. The chain is 2-phospho-L-lactate guanylyltransferase from Methanocaldococcus sp. (strain FS406-22).